We begin with the raw amino-acid sequence, 348 residues long: UPF0283 membrane protein PBPRA2435 (348 aa).

A run of 3 helical transmembrane segments spans residues 71–91, 97–117, and 211–231; these read GLLI…VVSA, WLAL…ITAL, and EAAV…LVAW.

It belongs to the UPF0283 family.

Its subcellular location is the cell inner membrane. The chain is UPF0283 membrane protein PBPRA2435 from Photobacterium profundum (strain SS9).